We begin with the raw amino-acid sequence, 448 residues long: Probable D-serine dehydratase (448 aa).

At K119 the chain carries N6-(pyridoxal phosphate)lysine.

The protein belongs to the serine/threonine dehydratase family. DsdA subfamily. Pyridoxal 5'-phosphate serves as cofactor.

The enzyme catalyses D-serine = pyruvate + NH4(+). This is Probable D-serine dehydratase from Pseudomonas paraeruginosa (strain DSM 24068 / PA7) (Pseudomonas aeruginosa (strain PA7)).